A 1011-amino-acid polypeptide reads, in one-letter code: Vacuolar membrane protease (1011 aa).

Topologically, residues 1–14 (MKLTKAVFRFRRTN) are cytoplasmic. Residues 15-35 (LSTLLVITYLVITTLYVWDHF) traverse the membrane as a helical segment. The Vacuolar portion of the chain corresponds to 36–352 (RYHFTLPSDY…WFVVWSARSL (317 aa)). Residues His-149, Asp-161, Glu-194, Glu-219, and His-293 each coordinate Zn(2+). A helical membrane pass occupies residues 353–373 (FYWNCIILALFPSILAILFLV). Residues 374–390 (AYDMQLLKFNFWDAMLR) are Cytoplasmic-facing. The helical transmembrane segment at 391–411 (LPVSVCLAYFCVKLFQVLVGQ) threads the bilayer. Over 412–420 (LNPYVFSRD) the chain is Vacuolar. A helical membrane pass occupies residues 421 to 441 (YVSPILAEASMFIFMNYVILS). Topologically, residues 442–451 (SWERLRPLRD) are cytoplasmic. The helical transmembrane segment at 452 to 472 (FKTVALVEVSMVLWIYLISVT) threads the bilayer. The Vacuolar segment spans residues 473–487 (RWLRDSDYTATGLYP). The chain crosses the membrane as a helical span at residues 488–508 (FTIGYTFVSIGAIIGVFCATF). Topologically, residues 509 to 647 (KAKLNPEDDS…SILNYDWSIQ (139 aa)) are cytoplasmic. A disordered region spans residues 534–585 (MQHQYQQHSQKHSNQHSPHHSTHHSAQHSVHHSPRQSIHQVPSSEQRQRDAS). Residues 542–567 (SQKHSNQHSPHHSTHHSAQHSVHHSP) are compositionally biased toward basic residues. The segment covering 568-578 (RQSIHQVPSSE) has biased composition (polar residues). A helical transmembrane segment spans residues 648–668 (FMVVTPWVTYFTWICLDLIMG). The Vacuolar segment spans residues 669-681 (AMNQTIQESAKGT). Asn-671 carries an N-linked (GlcNAc...) asparagine glycan. Residues 682–702 (TFVTHMALIGSLLLSLPMLPF) traverse the membrane as a helical segment. At 703–708 (TYKLHS) the chain is on the cytoplasmic side. Residues 709–729 (FAGMLFLLLAVTTAVWTIVAP) traverse the membrane as a helical segment. Residues 730 to 1011 (PFTESSPLKL…MVSVTKYVEL (282 aa)) are Vacuolar-facing. Asn-751, Asn-825, and Asn-854 each carry an N-linked (GlcNAc...) asparagine glycan.

It belongs to the peptidase M28 family. Zn(2+) serves as cofactor.

It is found in the vacuole membrane. Functionally, may be involved in vacuolar sorting and osmoregulation. The sequence is that of Vacuolar membrane protease from Eremothecium gossypii (strain ATCC 10895 / CBS 109.51 / FGSC 9923 / NRRL Y-1056) (Yeast).